The chain runs to 451 residues: Serine--tRNA ligase (451 aa).

An L-serine-binding site is contributed by 247–249 (TAE). Residues 278–280 (RKE) and Val-294 contribute to the ATP site. Residue Glu-301 participates in L-serine binding. Residue 365-368 (ELAS) coordinates ATP. Thr-400 provides a ligand contact to L-serine.

This sequence belongs to the class-II aminoacyl-tRNA synthetase family. Type-1 seryl-tRNA synthetase subfamily. As to quaternary structure, homodimer. The tRNA molecule binds across the dimer.

It is found in the cytoplasm. It catalyses the reaction tRNA(Ser) + L-serine + ATP = L-seryl-tRNA(Ser) + AMP + diphosphate + H(+). It carries out the reaction tRNA(Sec) + L-serine + ATP = L-seryl-tRNA(Sec) + AMP + diphosphate + H(+). Its pathway is aminoacyl-tRNA biosynthesis; selenocysteinyl-tRNA(Sec) biosynthesis; L-seryl-tRNA(Sec) from L-serine and tRNA(Sec): step 1/1. Its function is as follows. Catalyzes the attachment of serine to tRNA(Ser). Is also able to aminoacylate tRNA(Sec) with serine, to form the misacylated tRNA L-seryl-tRNA(Sec), which will be further converted into selenocysteinyl-tRNA(Sec). The polypeptide is Serine--tRNA ligase (Pyrobaculum aerophilum (strain ATCC 51768 / DSM 7523 / JCM 9630 / CIP 104966 / NBRC 100827 / IM2)).